A 230-amino-acid chain; its full sequence is NEDD8-conjugating enzyme Ubc12 (230 aa).

The interval 1 to 87 (MFRLKELQKK…AELRAQKDID (87 aa)) is disordered. The segment covering 10-20 (KQQQQQQQQQQ) has biased composition (low complexity). The segment covering 26–36 (TNGTDAVTTEP) has biased composition (polar residues). Residues 37-57 (TDVKRQNSNDLKEIRKQKSKD) are compositionally biased toward basic and acidic residues. The span at 61-70 (SLKTKQSSES) shows a compositional bias: polar residues. A UBC core domain is found at 77–221 (PAELRAQKDI…VRQSLRGGYI (145 aa)). The Glycyl thioester intermediate role is filled by Cys-159.

The protein belongs to the ubiquitin-conjugating enzyme family. UBC12 subfamily.

The enzyme catalyses [E1 NEDD8-activating enzyme]-S-[NEDD8 protein]-yl-L-cysteine + [E2 NEDD8-conjugating enzyme]-L-cysteine = [E1 NEDD8-activating enzyme]-L-cysteine + [E2 NEDD8-conjugating enzyme]-S-[NEDD8-protein]-yl-L-cysteine.. The protein operates within protein modification; protein neddylation. Its function is as follows. Accepts the ubiquitin-like protein nedd8 from the uba3-nae1 E1 complex and catalyzes its covalent attachment to other proteins. This Dictyostelium discoideum (Social amoeba) protein is NEDD8-conjugating enzyme Ubc12 (ube2m).